The sequence spans 73 residues: Excelsatoxin A (73 aa).

An N-terminal signal peptide occupies residues 1–20; that stretch reads MRFALVAAITIALLVAGSVA. Positions 21–37 are excised as a propeptide; it reads DESSEDIDNIVIKTPLD. 3 disulfides stabilise this stretch: cysteine 41/cysteine 58, cysteine 46/cysteine 60, and cysteine 54/cysteine 69.

This sequence belongs to the gympietide family. As to expression, expressed in trichomes, that are stiff epidermal hairs located on the surface of petioles and leaves. Not expressed in other aerial parts.

The protein localises to the secreted. Functionally, neurotoxin certainly responsible for the defensive, persistent, and painful stings of the giant stinging tree. Inhibits inactivation of Nav1.7/SCN9A sodium channel in sensory neurons by directly interacting with TMEM233, a newly described Nav-interacting protein. Has virtually no effect on Nav1.7/SCN9A function in heterologous expression systems and in neurons that do not express TMEM233. Also weakly but significantly affects Nav1.8/SCN10A. Coexpression of TMEM233 with Nav also confers ExTxA sensitivity to Nav1.1-Nav1.6. On the Nav1.7/SCN9A channel, causes a significant hyperpolarizing shift in the voltage dependence of activation. Its effects on Nav currents are irreversible, with no apparent reduction in activity even after repeated wash steps over 30 minutes. Does not show activity on Nav1.9/SCN11A. Does not show insecticidal activities. In vivo, induces nocifensive behavior in mice (licking or biting and shaking or lifting of the affected paw) lasting for approximately 1 hour. The polypeptide is Excelsatoxin A (Dendrocnide excelsa (Giant stinging tree)).